The sequence spans 103 residues: Histone H4 (103 aa).

Positions 1–14 are enriched in gly residues; sequence MSGRGKGGKGLGKG. Positions 1–20 are disordered; that stretch reads MSGRGKGGKGLGKGGAKRHR. Lys6 carries the N6-acetyl-N6-methyllysine; alternate modification. Residues Lys6, Lys9, and Lys13 each carry the N6-acetyllysine; alternate modification. N6-methyllysine; alternate occurs at positions 6, 9, and 13. 2 positions are modified to N6-butyryllysine; alternate: Lys9 and Lys13. At Lys13 the chain carries N6-acetyl-N6-methyllysine; alternate. Residue Lys17 is modified to N6-acetyllysine. The DNA-binding element occupies 17 to 21; the sequence is KRHRK. Lys32 carries the N6-succinyllysine modification. Arg56 is subject to Omega-N-methylarginine. Ser61 and Ser65 each carry phosphoserine. N6-succinyllysine is present on Lys78. N6-acetyllysine is present on Lys80. An N6-glutaryllysine modification is found at Lys92.

The protein belongs to the histone H4 family. The nucleosome is a histone octamer containing two molecules each of H2A, H2B, H3 and H4 assembled in one H3-H4 heterotetramer and two H2A-H2B heterodimers. The octamer wraps approximately 147 bp of DNA. Histone H4 is a component of the UAF (upstream activation factor) complex which consists of UAF30, RRN5, RRN9, RRN10, and histones H3 and H4. Glutarylation at Lys-92 (H4K91glu) destabilizes nucleosomes by promoting dissociation of the H2A-H2B dimers from nucleosomes.

It localises to the nucleus. Its subcellular location is the chromosome. Core component of nucleosome. Nucleosomes wrap and compact DNA into chromatin, limiting DNA accessibility to the cellular machineries which require DNA as a template. Histones thereby play a central role in transcription regulation, DNA repair, DNA replication and chromosomal stability. DNA accessibility is regulated via a complex set of post-translational modifications of histones, also called histone code, and nucleosome remodeling. Component of the UAF (upstream activation factor) complex which interacts with the upstream element of the RNA polymerase I promoter and forms a stable preinitiation complex. Together with SPT15/TBP UAF seems to stimulate basal transcription to a fully activated level. The protein is Histone H4 (HHF1) of Saccharomyces cerevisiae (strain ATCC 204508 / S288c) (Baker's yeast).